A 148-amino-acid polypeptide reads, in one-letter code: Protein RESISTANCE TO POWDERY MILDEW 8.1 (148 aa).

An RPW8 domain is found at 1-148 (MPIGELAIGA…VISACSKIRA (148 aa)). Residues 7-23 (AIGAVLGVGAQAIYDRF) traverse the membrane as a helical segment. A coiled-coil region spans residues 120–140 (DDIKEIKAKISEMDTKLAEVI).

It belongs to the plant RPW8 protein family.

The protein localises to the membrane. Disease resistance (R) protein that induces localized, salicylic acid-dependent defenses. Confers resistance to powdery mildew (e.g. Erysiphe cichoracearum UCSC1). This chain is Protein RESISTANCE TO POWDERY MILDEW 8.1, found in Arabidopsis thaliana (Mouse-ear cress).